We begin with the raw amino-acid sequence, 292 residues long: Tissue factor (292 aa).

Residues 1 to 35 (MATPNGPRVPCPQAAVARALLFGLVLIQGAGVAGT) form the signal peptide. Residues 36–248 (TDVVVAYNIT…TSHEKVLSTE (213 aa)) are Extracellular-facing. An N-linked (GlcNAc...) asparagine glycan is attached at N43. Residues 46–48 (WKS) carry the WKS motif motif. C81 and C89 are disulfide-bonded. N-linked (GlcNAc...) asparagine glycosylation is found at N153 and N181. Cysteines 215 and 238 form a disulfide. Residues 249–271 (LFFIIGTVMLVIIIFIVVLSVSL) form a helical membrane-spanning segment. Residues 272–292 (HKCRKVRAERSGKENTPLNAA) are Cytoplasmic-facing. C274 carries S-palmitoyl cysteine lipidation.

Belongs to the tissue factor family. As to quaternary structure, interacts with HSPE; the interaction, inhibited by heparin, promotes the generation of activated factor X and activates coagulation in the presence of activated factor VII.

Its subcellular location is the membrane. Its function is as follows. Initiates blood coagulation by forming a complex with circulating factor VII or VIIa. The [TF:VIIa] complex activates factors IX or X by specific limited proteolysis. TF plays a role in normal hemostasis by initiating the cell-surface assembly and propagation of the coagulation protease cascade. The protein is Tissue factor (F3) of Bos taurus (Bovine).